Here is a 2627-residue protein sequence, read N- to C-terminus: Telomerase protein component 1 (2627 aa).

4 TEP1 N-terminal repeats span residues 1–30 (MEKLHGHVSAHPDILSLENRCLAMLPDLQP), 31–60 (LEKLHQHVSTHSDILSLKNQCLATLPDLKT), 61–90 (MEKPHGYVSAHPDILSLENQCLATLSDLKT), and 91–120 (MEKPHGHVSAHPDILSLENRCLATLSSLKS). Disordered regions lie at residues 193 to 214 (FDSEEKKGAETQMPSYSLSLGE) and 383 to 402 (RKHRAKRHPRRPPRSPGMEP). Residues 223-676 (VKLTSGDSES…VKHSLPLLPG (454 aa)) form the TROVE domain. Residues 383–395 (RKHRAKRHPRRPP) are compositionally biased toward basic residues. An NACHT domain is found at 1162–1490 (RLSLVTGQSG…PLERPGARLC (329 aa)). Residue 1168-1175 (GQSGQGKT) coordinates ATP. 19 WD repeats span residues 1411 to 1448 (VLPQALTALEVTRSGLTVDQLHGVLSVWRTLPKGTKSW), 1674 to 1713 (AVSSSPTAVAFSTNGQRAAVGTANGTVYLLDLRTWQEEKS), 1716 to 1754 (SGCDGISACLFLSDDTLFLTAFDGLLELWDLQHGCRVLQ), 1757 to 1796 (AHQYQITGCCLSPDCRLLATVCLGGCLKLWDTVRGQLAFQ), 1798 to 1837 (TYPKSLNCVAFHPEGQVIATGSWAGSISFFQVDGLKVTKD), 1840 to 1879 (APGASIRTLAFNVPGGVVAVGRLDSMVELWAWREGARLAA), 1882 to 1921 (AHHGFVAAALFLHAGCQLLTAGEDGKVQVWSGSLGRPRGH), 1925 to 1964 (LSLSPALSVALSPDGDRVAVGYRADGIRIYKISSGSQGAQ), 1967 to 2005 (ALDVAVSALAWLSPKVLVSGAEDGSLQGWALKECSLQSL), 2008 to 2047 (LSRFQKPVLGLATSQELLASASEDFTVQLWPRQLLTRPHK), 2059 to 2098 (GHEGPVSCCSFSTDGGSLATGGRDRSLLCWDVRTPKTPVL), 2105 to 2143 (CHRDWVTGCAWTKDNLLISCSSDGSVGLWDPESGQRLGQ), 2146 to 2183 (GHQSAVSAVAAVEEHVVSVSRDGTLKVWDHQGVELTSI), 2185 to 2233 (AHSG…QTHT), 2236 to 2275 (GHSGPVRAAAVSETSGLMLTASEDGSVRLWQVPKEADDTC), 2278 to 2317 (RSSAAVTAVAWAPDGSMAVSGNQAGELILWQEAKAVATAQ), 2319 to 2355 (PGHIGALIWSSAHTFFVLSADEKISEWQVKLRKGSAP), 2368 to 2417 (EDLG…PMIL), and 2459 to 2500 (NPSR…GEWT). Residues 2506 to 2522 (QKKANTPETQTPGTDPS) show a composition bias toward polar residues. The interval 2506-2551 (QKKANTPETQTPGTDPSTCRESDASMDSDASMDSEPTPHLKTRQRR) is disordered. 2 WD repeats span residues 2553 to 2590 (IHSGSVTALHVLPELLVTASKDRDVKLWERPSMQLLGL) and 2592 to 2626 (RCEGSVSCLEPWLGANSTLQLAVGDVQGNVYFLNW).

In terms of assembly, associated component of the telomerase holoenzyme complex. Component of the vault ribonucleoprotein particle, at least composed of MVP, PARP4 and one or more vault RNAs (vRNAs). Binds to VAULTRC1, VAULTRC2 and VAULTRC4/hvg4 vRNAs. In terms of tissue distribution, ubiquitous.

The protein localises to the nucleus. It is found in the chromosome. The protein resides in the telomere. Component of the telomerase ribonucleoprotein complex that is essential for the replication of chromosome termini. Also a component of the ribonucleoprotein vaults particle, a multi-subunit structure involved in nucleo-cytoplasmic transport. Responsible for the localizing and stabilizing vault RNA (vRNA) association in the vault ribonucleoprotein particle. Binds to TERC. The polypeptide is Telomerase protein component 1 (TEP1) (Homo sapiens (Human)).